We begin with the raw amino-acid sequence, 589 residues long: Serine/threonine-protein phosphatase 2A 65 kDa regulatory subunit A alpha isoform (589 aa).

A2 carries the N-acetylalanine modification. HEAT repeat units lie at residues 8–46 (DSLYPIAVLIDELRNEDVQLRLNSIKKLSTIALALGVER), 47–84 (TRSELLPFLTDTIYDEDEVLLALAEQLGTFTTLVGGPE), 85–123 (YVHCLLPPLESLATVEETVVRDKAVESLRAISHEHSPSD), 124–161 (LEAHFVPLVKRLAGGDWFTSRTSACGLFSVCYPRVSSA), 162–200 (VKAELRQYFRNLCSDDTPMVRRAAASKLGEFAKVLELDN), 201–239 (VKSEIIPMFSNLASDEQDSVRLLAVEACVNIAQLLPQED), 240–278 (LEALVMPTLRQAAEDKSWRVRYMVADKFTELQKAVGPEI), 279–321 (TKTD…RENV), 322–360 (IMTQILPCIKELVSDANQHVKSALASVIMGLSPILGKDN), 361–399 (TIEHLLPLFLAQLKDECPEVRLNIISNLDCVNEVIGIRQ), 400–438 (LSQSLLPAIVELAEDAKWRVRLAIIEYMPLLAGQLGVEF), 439–477 (FDEKLNSLCMAWLVDHVYAIREAATSNLKKLVEKFGKEW), 478–516 (AHATIIPKVLAMSGDPNYLHRMTTLFCINVLSEVCGQDI), 517–555 (TTKHMLPTVLRMAGDPVANVRFNVAKSLQKIGPILDNST), and 556–589 (LQSEVKPILEKLTQDQDVDVKYFAQEALTVLSLA). At K280 the chain carries N6-acetyllysine.

Belongs to the phosphatase 2A regulatory subunit A family. PP2A consists of a common heterodimeric core enzyme, composed of PPP2CA a 36 kDa catalytic subunit (subunit C) and PPP2R1A a 65 kDa constant regulatory subunit (PR65 or subunit A), that associates with a variety of regulatory subunits. Proteins that associate with the core dimer include three families of regulatory subunits B (the R2/B/PR55/B55, R3/B''/PR72/PR130/PR59 and R5/B'/B56 families), the 48 kDa variable regulatory subunit, viral proteins, and cell signaling molecules. Found in a complex with at least ARL2, PPP2CB, PPP2R1A, PPP2R2A, PPP2R5E and TBCD. Interacts with the PP2A C catalytic subunit PPP2CA. Interacts with the PP2A B subunit PPP2R2A. Interacts with the PP2A B subunit PPP2R5D. Interacts with FOXO1; the interaction dephosphorylates FOXO1 on AKT-mediated phosphorylation sites. Interacts with IPO9. Interacts with TP53 and SGO1. Interacts with PLA2G16; this interaction might decrease PP2A activity. Interacts with CTTNBP2NL. Interacts with GNA12; the interaction promotes protein phosphatase 2A activation causing dephosphorylation of MAPT. Interacts with CIP2A; this interaction stabilizes CIP2A. Interacts with PABIR1/FAM122A. Interacts with ADCY8; antagonizes interaction between ADCY8 and calmodulin. Interacts with CRTC3 (when phosphorylated at 'Ser-391'). Interacts with SPRY2. Part of the core of STRIPAK complexes composed of PP2A catalytic and scaffolding subunits, the striatins (PP2A regulatory subunits), the striatin-associated proteins MOB4, STRIP1 and STRIP2, PDCD10 and members of the STE20 kinases, such as STK24 and STK26. Component of the Integrator-PP2A (INTAC) complex, composed of the Integrator core complex and protein phosphatase 2A subunits PPP2CA and PPP2R1A.

The protein resides in the cytoplasm. The protein localises to the nucleus. It localises to the chromosome. It is found in the centromere. Its subcellular location is the lateral cell membrane. The protein resides in the cell projection. The protein localises to the dendrite. The PR65 subunit of protein phosphatase 2A serves as a scaffolding molecule to coordinate the assembly of the catalytic subunit and a variable regulatory B subunit. Upon interaction with GNA12 promotes dephosphorylation of microtubule associated protein TAU/MAPT. Required for proper chromosome segregation and for centromeric localization of SGO1 in mitosis. Together with RACK1 adapter, mediates dephosphorylation of AKT1 at 'Ser-473', preventing AKT1 activation and AKT-mTOR signaling pathway. Dephosphorylation of AKT1 is essential for regulatory T-cells (Treg) homeostasis and stability. Part of the striatin-interacting phosphatase and kinase (STRIPAK) complexes. STRIPAK complexes have critical roles in protein (de)phosphorylation and are regulators of multiple signaling pathways including Hippo, MAPK, nuclear receptor and cytoskeleton remodeling. Different types of STRIPAK complexes are involved in a variety of biological processes such as cell growth, differentiation, apoptosis, metabolism and immune regulation. Key mediator of a quality checkpoint during transcription elongation as part of the Integrator-PP2A (INTAC) complex. The INTAC complex drives premature transcription termination of transcripts that are unfavorably configured for transcriptional elongation: within the INTAC complex, acts as a scaffolding subunit for PPP2CA, which catalyzes dephosphorylation of the C-terminal domain (CTD) of Pol II subunit POLR2A/RPB1 and SUPT5H/SPT5, thereby preventing transcriptional elongation. Regulates the recruitment of the SKA complex to kinetochores. The protein is Serine/threonine-protein phosphatase 2A 65 kDa regulatory subunit A alpha isoform (Ppp2r1a) of Mus musculus (Mouse).